A 389-amino-acid polypeptide reads, in one-letter code: MGIKGLNKLLMEHCPAALRSSEIKNFGGRKVAIDASMSLYQFVIAVRQADGQQLTNENGETTSHLMGMFYRTLRMVDNGIKPVYVFDGKPPVLKSGELAKRKERREEALKKIEELKQQVEDGEEGEETKEAQEDVTRFEKRTVRVTPEQNDEAKKLLTLMGIPIVEAPCEAEAQCAKLAEAGKVYAAASEDMDTLCFGSPVLLRHLTFSEAKKMPISEINFAKILEGLEMTHAQFIDLCILLGCDYADTIRGVGPQTALKLMKEHGSLEKIVEHIEKNPSGKLKVPENWPYQEVRALLQAPDVLDSSSCDIKWNNPDVEGLVDFLVRDKGFSEDRVRAGAARLMKQVKVKPQARLDGFFKVMPKEGGEKRKADDKKTKGKKPATKKAKK.

The interval 1–105 (MGIKGLNKLL…GELAKRKERR (105 aa)) is N-domain. Asp-34 is a Mg(2+) binding site. DNA contacts are provided by Arg-47 and Arg-71. 5 residues coordinate Mg(2+): Asp-87, Glu-170, Glu-172, Asp-191, and Asp-193. The tract at residues 134–265 (DVTRFEKRTV…QTALKLMKEH (132 aa)) is I-domain. Position 170 (Glu-170) interacts with DNA. 2 residues coordinate DNA: Gly-243 and Asp-245. Position 245 (Asp-245) interacts with Mg(2+). The interval 351 to 359 (PQARLDGFF) is interaction with PCNA. The disordered stretch occupies residues 360–389 (KVMPKEGGEKRKADDKKTKGKKPATKKAKK). A compositionally biased stretch (basic and acidic residues) spans 362–376 (MPKEGGEKRKADDKK). The span at 377 to 389 (TKGKKPATKKAKK) shows a compositional bias: basic residues.

This sequence belongs to the XPG/RAD2 endonuclease family. FEN1 subfamily. In terms of assembly, interacts with PCNA. Three molecules of FEN1 bind to one PCNA trimer with each molecule binding to one PCNA monomer. PCNA stimulates the nuclease activity without altering cleavage specificity. Requires Mg(2+) as cofactor. In terms of processing, phosphorylated. Phosphorylation upon DNA damage induces relocalization to the nuclear plasma.

The protein resides in the nucleus. The protein localises to the nucleolus. It is found in the nucleoplasm. Its subcellular location is the mitochondrion. Functionally, structure-specific nuclease with 5'-flap endonuclease and 5'-3' exonuclease activities involved in DNA replication and repair. During DNA replication, cleaves the 5'-overhanging flap structure that is generated by displacement synthesis when DNA polymerase encounters the 5'-end of a downstream Okazaki fragment. It enters the flap from the 5'-end and then tracks to cleave the flap base, leaving a nick for ligation. Also involved in the long patch base excision repair (LP-BER) pathway, by cleaving within the apurinic/apyrimidinic (AP) site-terminated flap. Acts as a genome stabilization factor that prevents flaps from equilibrating into structures that lead to duplications and deletions. Also possesses 5'-3' exonuclease activity on nicked or gapped double-stranded DNA, and exhibits RNase H activity. Also involved in replication and repair of rDNA and in repairing mitochondrial DNA. This is Flap endonuclease 1 from Yarrowia lipolytica (strain CLIB 122 / E 150) (Yeast).